The primary structure comprises 172 residues: Endoribonuclease YbeY (172 aa).

His-124, His-128, and His-134 together coordinate Zn(2+).

Belongs to the endoribonuclease YbeY family. The cofactor is Zn(2+).

Its subcellular location is the cytoplasm. Single strand-specific metallo-endoribonuclease involved in late-stage 70S ribosome quality control and in maturation of the 3' terminus of the 16S rRNA. The polypeptide is Endoribonuclease YbeY (Rhodopseudomonas palustris (strain BisA53)).